The sequence spans 89 residues: Small ribosomal subunit protein uS14A (89 aa).

The protein belongs to the universal ribosomal protein uS14 family. As to quaternary structure, part of the 30S ribosomal subunit. Contacts proteins S3 and S10.

In terms of biological role, binds 16S rRNA, required for the assembly of 30S particles and may also be responsible for determining the conformation of the 16S rRNA at the A site. The sequence is that of Small ribosomal subunit protein uS14A from Staphylococcus epidermidis (strain ATCC 35984 / DSM 28319 / BCRC 17069 / CCUG 31568 / BM 3577 / RP62A).